A 192-amino-acid chain; its full sequence is MGVPERPTLLLLLSLLLIPLGLPVLCAPPRLICDSRVLERYILEAKEAENVTMGCAEGPRLSENITVPDTKVNFYAWKRMEVEEQAIEVWQGLSLLSEAILQAQALLANSSQPPETLQLHIDKAISGLRSLTSLLRVLGAQKELMSPPDTTPPAPLRTLTVDTFCKLFRVYANFLRGKLKLYTGEVCRRGDR.

Residues 1 to 26 (MGVPERPTLLLLLSLLLIPLGLPVLC) form the signal peptide. A disulfide bridge connects residues C33 and C187. N-linked (GlcNAc...) asparagine glycosylation is found at N50, N64, and N109.

This sequence belongs to the EPO/TPO family. Produced by kidney or liver of adult mammals and by liver of fetal or neonatal mammals.

The protein resides in the secreted. Functionally, hormone involved in the regulation of erythrocyte proliferation and differentiation and the maintenance of a physiological level of circulating erythrocyte mass. Binds to EPOR leading to EPOR dimerization and JAK2 activation thereby activating specific downstream effectors, including STAT1 and STAT3. This chain is Erythropoietin (Epo), found in Mus musculus (Mouse).